Consider the following 163-residue polypeptide: ATP synthase subunit b 2 (163 aa).

A helical transmembrane segment spans residues 5 to 25 (SLATLWATIALIIFLGVAIYI).

Belongs to the ATPase B chain family. In terms of assembly, F-type ATPases have 2 components, F(1) - the catalytic core - and F(0) - the membrane proton channel. F(1) has five subunits: alpha(3), beta(3), gamma(1), delta(1), epsilon(1). F(0) has three main subunits: a(1), b(2) and c(10-14). The alpha and beta chains form an alternating ring which encloses part of the gamma chain. F(1) is attached to F(0) by a central stalk formed by the gamma and epsilon chains, while a peripheral stalk is formed by the delta and b chains.

The protein resides in the cell inner membrane. In terms of biological role, f(1)F(0) ATP synthase produces ATP from ADP in the presence of a proton or sodium gradient. F-type ATPases consist of two structural domains, F(1) containing the extramembraneous catalytic core and F(0) containing the membrane proton channel, linked together by a central stalk and a peripheral stalk. During catalysis, ATP synthesis in the catalytic domain of F(1) is coupled via a rotary mechanism of the central stalk subunits to proton translocation. Component of the F(0) channel, it forms part of the peripheral stalk, linking F(1) to F(0). The chain is ATP synthase subunit b 2 from Mesorhizobium japonicum (strain LMG 29417 / CECT 9101 / MAFF 303099) (Mesorhizobium loti (strain MAFF 303099)).